Here is a 34-residue protein sequence, read N- to C-terminus: Mu-theraphotoxin-CCy1a (34 aa).

Intrachain disulfides connect C3-C18, C10-C23, and C17-C30.

The protein belongs to the neurotoxin 10 (Hwtx-1) family. 14 (Hntx-1) subfamily. As to expression, expressed by the venom gland.

It is found in the secreted. Voltage-gated sodium channel Nav1.7/SCN9A inhibitor. The polypeptide is Mu-theraphotoxin-CCy1a (Chromatopelma cyaneopubescens (Greenbottle blue tarantula)).